The chain runs to 122 residues: Large ribosomal subunit protein uL14 (122 aa).

This sequence belongs to the universal ribosomal protein uL14 family. Part of the 50S ribosomal subunit. Forms a cluster with proteins L3 and L19. In the 70S ribosome, L14 and L19 interact and together make contacts with the 16S rRNA in bridges B5 and B8.

In terms of biological role, binds to 23S rRNA. Forms part of two intersubunit bridges in the 70S ribosome. This Latilactobacillus sakei subsp. sakei (strain 23K) (Lactobacillus sakei subsp. sakei) protein is Large ribosomal subunit protein uL14.